A 492-amino-acid polypeptide reads, in one-letter code: 1-aminocyclopropane-1-carboxylate synthase 1 (492 aa).

Residue Lys277 is modified to N6-(pyridoxal phosphate)lysine.

It belongs to the class-I pyridoxal-phosphate-dependent aminotransferase family. In terms of assembly, homodimer. Pyridoxal 5'-phosphate is required as a cofactor.

The catalysed reaction is S-adenosyl-L-methionine = 1-aminocyclopropane-1-carboxylate + S-methyl-5'-thioadenosine + H(+). It functions in the pathway alkene biosynthesis; ethylene biosynthesis via S-adenosyl-L-methionine; ethylene from S-adenosyl-L-methionine: step 1/2. Catalyzes the formation of 1-aminocyclopropane-1-carboxylate, a direct precursor of ethylene in higher plants. The chain is 1-aminocyclopropane-1-carboxylate synthase 1 (ACS1) from Prunus mume (Japanese apricot).